The following is a 316-amino-acid chain: 4-hydroxyphenylacetate decarboxylase activating enzyme (316 aa).

Positions 20–307 constitute a Radical SAM core domain; the sequence is HDGPGCRTTV…QDIFLDNGIA (288 aa). Cysteine 34, cysteine 38, cysteine 41, cysteine 60, cysteine 66, cysteine 69, and cysteine 105 together coordinate [4Fe-4S] cluster. 40–42 provides a ligand contact to S-adenosyl-L-methionine; it reads WCA. The 4Fe-4S ferredoxin-type domain occupies 84–115; it reads NKPVIDWNICKDCESFECVNSCYYNAFKLCAK. S-adenosyl-L-methionine-binding positions include glycine 144, 193-195, and histidine 267; that span reads DIK.

Belongs to the organic radical-activating enzymes family. As to quaternary structure, monomer. [4Fe-4S] cluster is required as a cofactor.

The catalysed reaction is glycyl-[protein] + reduced [flavodoxin] + S-adenosyl-L-methionine = glycin-2-yl radical-[protein] + semiquinone [flavodoxin] + 5'-deoxyadenosine + L-methionine + H(+). In terms of biological role, catalyzes activation of 4-hydroxyphenylacetate decarboxylase under anaerobic conditions by generation of an organic free radical on a glycine residue, via a homolytic cleavage of S-adenosyl-L-methionine (SAM). This chain is 4-hydroxyphenylacetate decarboxylase activating enzyme, found in Clostridioides difficile (Peptoclostridium difficile).